The following is a 210-amino-acid chain: Small ribosomal subunit protein uS3 (210 aa).

Positions 17–86 constitute a KH type-2 domain; that stretch reads IDEFLEKELR…NPQIDVQEIK (70 aa).

The protein belongs to the universal ribosomal protein uS3 family. As to quaternary structure, part of the 30S ribosomal subunit.

In terms of biological role, binds the lower part of the 30S subunit head. This chain is Small ribosomal subunit protein uS3, found in Pyrococcus abyssi (strain GE5 / Orsay).